The chain runs to 196 residues: Recombination protein RecR (196 aa).

The segment at 56 to 71 (CPVCGGLDSQQPCMIC) adopts a C4-type zinc-finger fold. Residues 78–172 (PLICVVETVA…SVTRLAQGVP (95 aa)) enclose the Toprim domain.

This sequence belongs to the RecR family.

Functionally, may play a role in DNA repair. It seems to be involved in an RecBC-independent recombinational process of DNA repair. It may act with RecF and RecO. The chain is Recombination protein RecR from Acidiphilium cryptum (strain JF-5).